Consider the following 276-residue polypeptide: Lysosome-associated membrane glycoprotein 5 (276 aa).

Residues 1-27 (MDYRACTSALRMPVLLLLLCTFSCNLA) form the signal peptide. Topologically, residues 28–231 (EQEVENLSGL…PTDQRKQLEE (204 aa)) are extracellular. Asn-33, Asn-51, and Asn-100 each carry an N-linked (GlcNAc...) asparagine glycan. A helical membrane pass occupies residues 232 to 252 (TLPLILGLTLGVAILIIVAVY). The Cytoplasmic segment spans residues 253–276 (HIHHKMTANQVQIPRDRSLYKHMG).

The protein belongs to the LAMP family. In terms of processing, glycosylated.

It is found in the cytoplasmic vesicle membrane. The protein resides in the cell membrane. The protein localises to the cell projection. Its subcellular location is the dendrite. It localises to the cytoplasmic vesicle. It is found in the secretory vesicle. The protein resides in the synaptic vesicle membrane. The protein localises to the growth cone membrane. Its subcellular location is the early endosome membrane. It localises to the recycling endosome. It is found in the endoplasmic reticulum-Golgi intermediate compartment membrane. The protein resides in the endosome membrane. Plays a role in short-term synaptic plasticity in a subset of GABAergic neurons in the brain. This chain is Lysosome-associated membrane glycoprotein 5 (lamp5), found in Xenopus tropicalis (Western clawed frog).